Here is a 616-residue protein sequence, read N- to C-terminus: Adenylosuccinate synthetase 1 (616 aa).

A disordered region spans residues 1-27 (MDKQAERGQSAGPVKTPQGTQPPAHNY). Positions 17-27 (PQGTQPPAHNY) are enriched in polar residues. Residues 87-93 (GDEGKGK) and 117-119 (GHT) each bind GTP. The active-site Proton acceptor is the Asp-88. Residues Asp-88 and Gly-117 each contribute to the Mg(2+) site. IMP is bound by residues 88–91 (DEGK), 115–118 (NAGH), Thr-202, Lys-216, Gln-328, Thr-343, and Lys-472. His-118 acts as the Proton donor in catalysis. 468–474 (AVTKKPR) contributes to the substrate binding site. GTP-binding positions include Arg-474 and 603–605 (GNG).

This sequence belongs to the adenylosuccinate synthetase family. In terms of assembly, homodimer. The cofactor is Mg(2+).

Its subcellular location is the cytoplasm. The enzyme catalyses IMP + L-aspartate + GTP = N(6)-(1,2-dicarboxyethyl)-AMP + GDP + phosphate + 2 H(+). The protein operates within purine metabolism; AMP biosynthesis via de novo pathway; AMP from IMP: step 1/2. In terms of biological role, plays an important role in the salvage pathway for purine nucleotide biosynthesis. Catalyzes the first committed step in the biosynthesis of AMP from IMP. The sequence is that of Adenylosuccinate synthetase 1 from Trypanosoma cruzi (strain CL Brener).